A 439-amino-acid chain; its full sequence is Proline--tRNA ligase (439 aa).

It belongs to the class-II aminoacyl-tRNA synthetase family. ProS type 2 subfamily. As to quaternary structure, homodimer.

The protein resides in the cytoplasm. The enzyme catalyses tRNA(Pro) + L-proline + ATP = L-prolyl-tRNA(Pro) + AMP + diphosphate. In terms of biological role, catalyzes the attachment of proline to tRNA(Pro) in a two-step reaction: proline is first activated by ATP to form Pro-AMP and then transferred to the acceptor end of tRNA(Pro). In Nitrobacter winogradskyi (strain ATCC 25391 / DSM 10237 / CIP 104748 / NCIMB 11846 / Nb-255), this protein is Proline--tRNA ligase.